The primary structure comprises 359 residues: Glycerol-1-phosphate dehydrogenase [NAD(P)+] (359 aa).

NAD(+) contacts are provided by residues 107 to 111 (GRVID) and 129 to 132 (TAAS). Asp134 provides a ligand contact to substrate. Ser138 contributes to the NAD(+) binding site. A substrate-binding site is contributed by Asp181. Asp181 and His261 together coordinate Zn(2+). Residue His265 participates in substrate binding. Residue His277 coordinates Zn(2+).

This sequence belongs to the glycerol-1-phosphate dehydrogenase family. The cofactor is Zn(2+).

The protein resides in the cytoplasm. It catalyses the reaction sn-glycerol 1-phosphate + NAD(+) = dihydroxyacetone phosphate + NADH + H(+). It carries out the reaction sn-glycerol 1-phosphate + NADP(+) = dihydroxyacetone phosphate + NADPH + H(+). It participates in membrane lipid metabolism; glycerophospholipid metabolism. Catalyzes the NAD(P)H-dependent reduction of dihydroxyacetonephosphate (DHAP or glycerone phosphate) to glycerol 1-phosphate (G1P). The G1P thus generated is used as the glycerophosphate backbone of phospholipids in the cellular membranes of Archaea. In Methanosphaerula palustris (strain ATCC BAA-1556 / DSM 19958 / E1-9c), this protein is Glycerol-1-phosphate dehydrogenase [NAD(P)+].